Reading from the N-terminus, the 517-residue chain is Ribonuclease Y (517 aa).

The helical transmembrane segment at 1-21 threads the bilayer; it reads MIESLIALIAAIVGLGIGYLV. Residues 207–273 enclose the KH domain; that stretch reads LINVINIKND…TKVIELLVED (67 aa). The HD domain occupies 333–426; sequence ALAHSLEVAH…VCAADTLSAA (94 aa).

This sequence belongs to the RNase Y family.

Its subcellular location is the cell membrane. In terms of biological role, endoribonuclease that initiates mRNA decay. This Campylobacter jejuni subsp. jejuni serotype O:23/36 (strain 81-176) protein is Ribonuclease Y.